Consider the following 425-residue polypeptide: Serine--tRNA ligase (425 aa).

230–232 (TAE) contacts L-serine. 261-263 (RSE) is a binding site for ATP. An L-serine-binding site is contributed by glutamate 284. Residue 348-351 (EISS) participates in ATP binding. Serine 384 contacts L-serine.

Belongs to the class-II aminoacyl-tRNA synthetase family. Type-1 seryl-tRNA synthetase subfamily. As to quaternary structure, homodimer. The tRNA molecule binds across the dimer.

The protein localises to the cytoplasm. It carries out the reaction tRNA(Ser) + L-serine + ATP = L-seryl-tRNA(Ser) + AMP + diphosphate + H(+). It catalyses the reaction tRNA(Sec) + L-serine + ATP = L-seryl-tRNA(Sec) + AMP + diphosphate + H(+). It functions in the pathway aminoacyl-tRNA biosynthesis; selenocysteinyl-tRNA(Sec) biosynthesis; L-seryl-tRNA(Sec) from L-serine and tRNA(Sec): step 1/1. In terms of biological role, catalyzes the attachment of serine to tRNA(Ser). Is also able to aminoacylate tRNA(Sec) with serine, to form the misacylated tRNA L-seryl-tRNA(Sec), which will be further converted into selenocysteinyl-tRNA(Sec). The sequence is that of Serine--tRNA ligase from Streptococcus pyogenes serotype M1.